A 161-amino-acid polypeptide reads, in one-letter code: Anthranilate 1,2-dioxygenase small subunit (161 aa).

It belongs to the bacterial ring-hydroxylating dioxygenase beta subunit family. Part of a multicomponent enzyme system composed of a reductase (AndAa), a ferredoxin (AndAb) and a two-subunit oxygenase component (AndAc and AndAd).

The catalysed reaction is anthranilate + NADH + O2 + 3 H(+) = catechol + NH4(+) + CO2 + NAD(+). It catalyses the reaction anthranilate + NADPH + O2 + 3 H(+) = catechol + NH4(+) + CO2 + NADP(+). The protein operates within aromatic compound metabolism; anthranilate degradation via hydroxylation; catechol from anthranilate: step 1/1. Oxygenase component of anthranilate dioxygenase multicomponent enzyme system which catalyzes the incorporation of both atoms of molecular oxygen into anthranilate to form catechol. Can also act on benzoate and salicylate but not on 2-chlorobenzoate or o-toluate. The protein is Anthranilate 1,2-dioxygenase small subunit of Burkholderia cepacia (Pseudomonas cepacia).